Consider the following 326-residue polypeptide: Pyruvate dehydrogenase E1 component subunit beta (326 aa).

E59 is a binding site for thiamine diphosphate.

As to quaternary structure, heterodimer of an alpha and a beta chain. Requires thiamine diphosphate as cofactor.

The enzyme catalyses N(6)-[(R)-lipoyl]-L-lysyl-[protein] + pyruvate + H(+) = N(6)-[(R)-S(8)-acetyldihydrolipoyl]-L-lysyl-[protein] + CO2. Functionally, the pyruvate dehydrogenase complex catalyzes the overall conversion of pyruvate to acetyl-CoA and CO(2). It contains multiple copies of three enzymatic components: pyruvate dehydrogenase (E1), dihydrolipoamide acetyltransferase (E2) and lipoamide dehydrogenase (E3). The sequence is that of Pyruvate dehydrogenase E1 component subunit beta (pdhB) from Rickettsia felis (strain ATCC VR-1525 / URRWXCal2) (Rickettsia azadi).